A 51-amino-acid polypeptide reads, in one-letter code: Non-specific lipid-transfer protein (51 aa).

The protein belongs to the plant LTP family.

Plant non-specific lipid-transfer proteins transfer phospholipids as well as galactolipids across membranes. May play a role in wax or cutin deposition in the cell walls of expanding epidermal cells and certain secretory tissues. This Lycium barbarum (Barbary matrimony-vine) protein is Non-specific lipid-transfer protein.